The sequence spans 570 residues: Proline--tRNA ligase (570 aa).

Belongs to the class-II aminoacyl-tRNA synthetase family. ProS type 1 subfamily. As to quaternary structure, homodimer.

The protein resides in the cytoplasm. The catalysed reaction is tRNA(Pro) + L-proline + ATP = L-prolyl-tRNA(Pro) + AMP + diphosphate. Its function is as follows. Catalyzes the attachment of proline to tRNA(Pro) in a two-step reaction: proline is first activated by ATP to form Pro-AMP and then transferred to the acceptor end of tRNA(Pro). As ProRS can inadvertently accommodate and process non-cognate amino acids such as alanine and cysteine, to avoid such errors it has two additional distinct editing activities against alanine. One activity is designated as 'pretransfer' editing and involves the tRNA(Pro)-independent hydrolysis of activated Ala-AMP. The other activity is designated 'posttransfer' editing and involves deacylation of mischarged Ala-tRNA(Pro). The misacylated Cys-tRNA(Pro) is not edited by ProRS. The sequence is that of Proline--tRNA ligase from Shewanella sp. (strain MR-7).